The primary structure comprises 100 residues: Urease subunit gamma (100 aa).

It belongs to the urease gamma subunit family. In terms of assembly, heterotrimer of UreA (gamma), UreB (beta) and UreC (alpha) subunits. Three heterotrimers associate to form the active enzyme.

Its subcellular location is the cytoplasm. The enzyme catalyses urea + 2 H2O + H(+) = hydrogencarbonate + 2 NH4(+). The protein operates within nitrogen metabolism; urea degradation; CO(2) and NH(3) from urea (urease route): step 1/1. This is Urease subunit gamma from Pseudomonas putida (strain W619).